Reading from the N-terminus, the 295-residue chain is Elongation factor Ts (295 aa).

Positions 79–82 (TDFV) are involved in Mg(2+) ion dislocation from EF-Tu.

This sequence belongs to the EF-Ts family.

It localises to the cytoplasm. In terms of biological role, associates with the EF-Tu.GDP complex and induces the exchange of GDP to GTP. It remains bound to the aminoacyl-tRNA.EF-Tu.GTP complex up to the GTP hydrolysis stage on the ribosome. This is Elongation factor Ts from Bacillus mycoides (strain KBAB4) (Bacillus weihenstephanensis).